The following is a 124-amino-acid chain: SVAKSAQFPLHVWLPDAMEGPTPISALIHAATMVAAGIFLVARLLPLFIVIPSIMTGIALIGIITVVLGATLAIAQKDIKKNLAYSTMSQLGYMMLALGMGSYRAALFHLITHAYSKALLFLGS.

3 helical membrane-spanning segments follow: residues 22–42 (TPIS…FLVA), 44–64 (LLPL…IGII), and 91–111 (LGYM…FHLI).

This sequence belongs to the complex I subunit 5 family. NDH is composed of at least 16 different subunits, 5 of which are encoded in the nucleus.

Its subcellular location is the plastid. It localises to the chloroplast thylakoid membrane. The enzyme catalyses a plastoquinone + NADH + (n+1) H(+)(in) = a plastoquinol + NAD(+) + n H(+)(out). It catalyses the reaction a plastoquinone + NADPH + (n+1) H(+)(in) = a plastoquinol + NADP(+) + n H(+)(out). In terms of biological role, NDH shuttles electrons from NAD(P)H:plastoquinone, via FMN and iron-sulfur (Fe-S) centers, to quinones in the photosynthetic chain and possibly in a chloroplast respiratory chain. The immediate electron acceptor for the enzyme in this species is believed to be plastoquinone. Couples the redox reaction to proton translocation, and thus conserves the redox energy in a proton gradient. This is NAD(P)H-quinone oxidoreductase subunit 5, chloroplastic (ndhF) from Pisum sativum (Garden pea).